The sequence spans 430 residues: Tapasin (430 aa).

Residues 1–15 form the signal peptide; the sequence is MAAGLRLLLAGLCWS. The Lumenal portion of the chain corresponds to 16–399; it reads QFRVEDAASP…TEGPHLEDIT (384 aa). Cys34 and Cys99 form a disulfide bridge. Positions 61-128 are disordered; that stretch reads GDAETPPEPG…PDARSPPTAG (68 aa). A glycan (N-linked (GlcNAc...) asparagine) is linked at Asn78. The segment covering 101-111 has biased composition (polar residues); it reads LNPTNPQTGSD. Ig-like C1-type domains are found at residues 139–273 and 278–382; these read PQYG…LQLH and PKVT…MRVS. A disulfide bond links Cys299 and Cys368. The tract at residues 316 to 342 is disordered; that stretch reads RAGGSGTSQSPRDTVMDSWTSGHRQAA. Over residues 322 to 338 the composition is skewed to polar residues; the sequence is TSQSPRDTVMDSWTSGH. Residues 400 to 417 traverse the membrane as a helical segment; the sequence is GLFLVAFVLCGLIRWLYP. The Cytoplasmic segment spans residues 418–430; that stretch reads KAARPKEETKKSQ.

As to quaternary structure, interacts with TAP1 and is thus a subunit of the TAP complex. Interaction with TAP1 is TAP2 independent and is required for efficient peptide-TAP interaction. Obligatory mediator for the interaction between newly assembled MHC class I molecules, calreticulin, ERp57 and TAP. Up to 4 MHC class I/tapasin complexes bind to 1 TAP.

The protein localises to the endoplasmic reticulum membrane. Its function is as follows. Involved in the association of MHC class I with transporter associated with antigen processing (TAP) and in the assembly of MHC class I with peptide (peptide loading). In Gallus gallus (Chicken), this protein is Tapasin (TAPBP).